The following is a 114-amino-acid chain: Large ribosomal subunit protein uL24 (114 aa).

Belongs to the universal ribosomal protein uL24 family. Part of the 50S ribosomal subunit.

Functionally, one of two assembly initiator proteins, it binds directly to the 5'-end of the 23S rRNA, where it nucleates assembly of the 50S subunit. In terms of biological role, one of the proteins that surrounds the polypeptide exit tunnel on the outside of the subunit. This chain is Large ribosomal subunit protein uL24, found in Thermomicrobium roseum (strain ATCC 27502 / DSM 5159 / P-2).